The chain runs to 69 residues: DNA gyrase inhibitor YacG (69 aa).

Residues cysteine 7, cysteine 10, cysteine 26, and cysteine 30 each coordinate Zn(2+).

The protein belongs to the DNA gyrase inhibitor YacG family. In terms of assembly, interacts with GyrB. Zn(2+) is required as a cofactor.

Inhibits all the catalytic activities of DNA gyrase by preventing its interaction with DNA. Acts by binding directly to the C-terminal domain of GyrB, which probably disrupts DNA binding by the gyrase. The sequence is that of DNA gyrase inhibitor YacG from Shewanella baltica (strain OS155 / ATCC BAA-1091).